The sequence spans 269 residues: 3-methyl-2-oxobutanoate hydroxymethyltransferase (269 aa).

2 residues coordinate Mg(2+): Asp-50 and Asp-89. Residues 50 to 51, Asp-89, and Lys-118 contribute to the 3-methyl-2-oxobutanoate site; that span reads DS. Glu-120 contributes to the Mg(2+) binding site. Catalysis depends on Glu-187, which acts as the Proton acceptor.

This sequence belongs to the PanB family. As to quaternary structure, homodecamer; pentamer of dimers. Mg(2+) serves as cofactor.

Its subcellular location is the cytoplasm. It carries out the reaction 3-methyl-2-oxobutanoate + (6R)-5,10-methylene-5,6,7,8-tetrahydrofolate + H2O = 2-dehydropantoate + (6S)-5,6,7,8-tetrahydrofolate. Its pathway is cofactor biosynthesis; (R)-pantothenate biosynthesis; (R)-pantoate from 3-methyl-2-oxobutanoate: step 1/2. Functionally, catalyzes the reversible reaction in which hydroxymethyl group from 5,10-methylenetetrahydrofolate is transferred onto alpha-ketoisovalerate to form ketopantoate. This Nitrosomonas eutropha (strain DSM 101675 / C91 / Nm57) protein is 3-methyl-2-oxobutanoate hydroxymethyltransferase.